The chain runs to 1516 residues: Myosin-14 (1516 aa).

A Myosin N-terminal SH3-like domain is found at 7 to 56; it reads NVGSCVWVEDPEVAWIDGEVIEVKGSDIKVKCTSGKTVAIKVSSAYPKDV. A Myosin motor domain is found at 61–738; sequence SGVDDMTRLA…QMADLDARRN (678 aa). Residues 155 to 162 and 208 to 216 contribute to the ATP site; these read GESGAGKT and NNNSSRFGK. Actin-binding stretches follow at residues 494 to 528, 530 to 553, 588 to 612, and 612 to 634; these read LIEK…YQTF, DHKH…AGDV, FPLL…KQQL, and LVTL…KPNN. 6 IQ domains span residues 741 to 770, 764 to 793, 789 to 818, 812 to 841, 837 to 866, and 860 to 889; these read LGRA…VATN, LRKV…DAAV, RDAA…AAVS, LYFA…DKAA, QDKA…AAIT, and LKKA…AAKE. The stretch at 890–1056 forms a coiled coil; the sequence is TGVLEAAKSK…ENKILRQKSL (167 aa). The interval 1061–1085 is disordered; the sequence is GHLPPTPVKGSQNGHFSSKESPFNG. The span at 1069 to 1084 shows a compositional bias: polar residues; it reads KGSQNGHFSSKESPFN. In terms of domain architecture, Dilute spans 1158 to 1463; the sequence is DRLVQMIGSA…IANMRVLMTE (306 aa).

It belongs to the TRAFAC class myosin-kinesin ATPase superfamily. Myosin family. Plant myosin class XI subfamily. As to quaternary structure, homodimer.

In terms of biological role, myosin heavy chain that is required for the cell cycle-regulated transport of various organelles and proteins for their segregation. Functions by binding with its tail domain to receptor proteins on organelles and exerting force with its N-terminal motor domain against actin filaments, thereby transporting its cargo along polarized actin cables. The sequence is that of Myosin-14 (XI-H) from Arabidopsis thaliana (Mouse-ear cress).